A 740-amino-acid polypeptide reads, in one-letter code: Catalase-peroxidase (740 aa).

Positions 107–229 (WHAAGTYRIH…LAAVQMGLIY (123 aa)) form a cross-link, tryptophyl-tyrosyl-methioninium (Trp-Tyr) (with M-255). His-108 (proton acceptor) is an active-site residue. Positions 229–255 (YVNPEGPNGNPDPMAAAVDIRETFRRM) form a cross-link, tryptophyl-tyrosyl-methioninium (Tyr-Met) (with W-107). Position 270 (His-270) interacts with heme b. Catalysis depends on Trp-321, which acts as the Tryptophan radical intermediate.

The protein belongs to the peroxidase family. Peroxidase/catalase subfamily. Homodimer. Heme b serves as cofactor. Post-translationally, formation of the three residue Trp-Tyr-Met cross-link is important for the catalase, but not the peroxidase activity of the enzyme.

It carries out the reaction H2O2 + AH2 = A + 2 H2O. The catalysed reaction is 2 H2O2 = O2 + 2 H2O. In terms of biological role, bifunctional enzyme with both catalase and broad-spectrum peroxidase activity, oxidizing various electron donors including NADP(H). Protects M.tuberculosis against toxic reactive oxygen species (ROS) including hydrogen peroxide as well as organic peroxides and thus contributes to its survival within host macrophages by countering the phagocyte oxidative burst. Also displays efficient peroxynitritase activity, which may help the bacterium to persist in macrophages. Functionally, catalyzes the oxidative activation of the antitubercular pro-drug isoniazid (INH) to generate an isonicotinoyl radical that then reacts nonenzymatically with NAD to form an isonicotinoyl-NAD adduct which inhibits InhA. This is Catalase-peroxidase from Mycobacterium tuberculosis (strain CDC 1551 / Oshkosh).